A 720-amino-acid chain; its full sequence is Phosphoribosylformylglycinamidine synthase subunit PurL (720 aa).

The active site involves histidine 47. Tyrosine 50 and lysine 89 together coordinate ATP. Glutamate 91 contacts Mg(2+). Substrate is bound by residues serine 92–histidine 95 and arginine 114. Histidine 93 serves as the catalytic Proton acceptor. Aspartate 115 contributes to the Mg(2+) binding site. Residue glutamine 238 coordinates substrate. Aspartate 266 contacts Mg(2+). Glutamate 310–glutamine 312 lines the substrate pocket. ATP-binding residues include aspartate 488 and glycine 525. Asparagine 526 provides a ligand contact to Mg(2+). Serine 528 serves as a coordination point for substrate.

The protein belongs to the FGAMS family. Monomer. Part of the FGAM synthase complex composed of 1 PurL, 1 PurQ and 2 PurS subunits.

It localises to the cytoplasm. The catalysed reaction is N(2)-formyl-N(1)-(5-phospho-beta-D-ribosyl)glycinamide + L-glutamine + ATP + H2O = 2-formamido-N(1)-(5-O-phospho-beta-D-ribosyl)acetamidine + L-glutamate + ADP + phosphate + H(+). Its pathway is purine metabolism; IMP biosynthesis via de novo pathway; 5-amino-1-(5-phospho-D-ribosyl)imidazole from N(2)-formyl-N(1)-(5-phospho-D-ribosyl)glycinamide: step 1/2. Part of the phosphoribosylformylglycinamidine synthase complex involved in the purines biosynthetic pathway. Catalyzes the ATP-dependent conversion of formylglycinamide ribonucleotide (FGAR) and glutamine to yield formylglycinamidine ribonucleotide (FGAM) and glutamate. The FGAM synthase complex is composed of three subunits. PurQ produces an ammonia molecule by converting glutamine to glutamate. PurL transfers the ammonia molecule to FGAR to form FGAM in an ATP-dependent manner. PurS interacts with PurQ and PurL and is thought to assist in the transfer of the ammonia molecule from PurQ to PurL. The chain is Phosphoribosylformylglycinamidine synthase subunit PurL from Cereibacter sphaeroides (strain KD131 / KCTC 12085) (Rhodobacter sphaeroides).